A 266-amino-acid chain; its full sequence is UPF0246 protein Pcryo_0542 (266 aa).

This sequence belongs to the UPF0246 family.

This is UPF0246 protein Pcryo_0542 from Psychrobacter cryohalolentis (strain ATCC BAA-1226 / DSM 17306 / VKM B-2378 / K5).